The primary structure comprises 258 residues: Putative [LysW]-aminoadipate/[LysW]-glutamate kinase (258 aa).

Substrate-binding positions include 33–34 (GG), Arg60, and Asn164.

Belongs to the acetylglutamate kinase family. LysZ subfamily.

It is found in the cytoplasm. It carries out the reaction [amino-group carrier protein]-C-terminal-N-(1,4-dicarboxybutan-1-yl)-L-glutamine + ATP = [amino-group carrier protein]-C-terminal-N-(1-carboxy-5-phosphooxy-5-oxopentan-1-yl)-L-glutamine + ADP. The catalysed reaction is [amino-group carrier protein]-C-terminal-gamma-(L-glutamyl)-L-glutamate + ATP = [amino-group carrier protein]-C-terminal-gamma-(5-phospho-L-glutamyl)-L-glutamate + ADP. It functions in the pathway amino-acid biosynthesis; L-lysine biosynthesis via AAA pathway; L-lysine from L-alpha-aminoadipate (Thermus route): step 2/5. Its pathway is amino-acid biosynthesis; L-arginine biosynthesis. Involved in both the arginine and lysine biosynthetic pathways. Phosphorylates the LysW-bound precursors glutamate (for arginine biosynthesis), respectively alpha-aminoadipate (for lysine biosynthesis). The polypeptide is Putative [LysW]-aminoadipate/[LysW]-glutamate kinase (Caldivirga maquilingensis (strain ATCC 700844 / DSM 13496 / JCM 10307 / IC-167)).